The sequence spans 444 residues: C4-dicarboxylate transport protein (444 aa).

The next 9 helical transmembrane spans lie at phenylalanine 18 to tyrosine 40, alanine 53 to alanine 75, alanine 90 to valine 112, isoleucine 142 to alanine 159, isoleucine 163 to valine 180, leucine 201 to glycine 222, leucine 232 to valine 254, leucine 327 to alanine 349, and phenylalanine 364 to leucine 386.

This sequence belongs to the dicarboxylate/amino acid:cation symporter (DAACS) (TC 2.A.23) family.

Its subcellular location is the cell inner membrane. Responsible for the transport of dicarboxylates such as succinate, fumarate, and malate from the periplasm across the inner membrane. This transport system plays an important role in the energy supply of rhizobium-legume symbionts. The polypeptide is C4-dicarboxylate transport protein (dctA) (Rhizobium leguminosarum).